The following is a 309-amino-acid chain: HPr kinase/phosphorylase (309 aa).

Active-site residues include H138 and K159. ATP is bound at residue 153 to 160 (GDSGIGKS). S160 is a binding site for Mg(2+). D177 serves as the catalytic Proton acceptor; for phosphorylation activity. Proton donor; for dephosphorylation activity. Residues 201–210 (LEIRGVGIID) form an important for the catalytic mechanism of both phosphorylation and dephosphorylation region. Residue E202 participates in Mg(2+) binding. Residue R243 is part of the active site. An important for the catalytic mechanism of dephosphorylation region spans residues 264-269 (PVKTGR).

It belongs to the HPrK/P family. As to quaternary structure, homohexamer. Mg(2+) is required as a cofactor.

It catalyses the reaction [HPr protein]-L-serine + ATP = [HPr protein]-O-phospho-L-serine + ADP + H(+). The catalysed reaction is [HPr protein]-O-phospho-L-serine + phosphate + H(+) = [HPr protein]-L-serine + diphosphate. Its function is as follows. Catalyzes the ATP- as well as the pyrophosphate-dependent phosphorylation of a specific serine residue in HPr, a phosphocarrier protein of the phosphoenolpyruvate-dependent sugar phosphotransferase system (PTS). HprK/P also catalyzes the pyrophosphate-producing, inorganic phosphate-dependent dephosphorylation (phosphorolysis) of seryl-phosphorylated HPr (P-Ser-HPr). The two antagonistic activities of HprK/P are regulated by several intracellular metabolites, which change their concentration in response to the absence or presence of rapidly metabolisable carbon sources (glucose, fructose, etc.) in the growth medium. Therefore, by controlling the phosphorylation state of HPr, HPrK/P is a sensor enzyme that plays a major role in the regulation of carbon metabolism and sugar transport: it mediates carbon catabolite repression (CCR), and regulates PTS-catalyzed carbohydrate uptake and inducer exclusion. The chain is HPr kinase/phosphorylase from Streptococcus thermophilus (strain CNRZ 1066).